The sequence spans 95 residues: Aspartyl/glutamyl-tRNA(Asn/Gln) amidotransferase subunit C (95 aa).

It belongs to the GatC family. As to quaternary structure, heterotrimer of A, B and C subunits.

It catalyses the reaction L-glutamyl-tRNA(Gln) + L-glutamine + ATP + H2O = L-glutaminyl-tRNA(Gln) + L-glutamate + ADP + phosphate + H(+). It carries out the reaction L-aspartyl-tRNA(Asn) + L-glutamine + ATP + H2O = L-asparaginyl-tRNA(Asn) + L-glutamate + ADP + phosphate + 2 H(+). Allows the formation of correctly charged Asn-tRNA(Asn) or Gln-tRNA(Gln) through the transamidation of misacylated Asp-tRNA(Asn) or Glu-tRNA(Gln) in organisms which lack either or both of asparaginyl-tRNA or glutaminyl-tRNA synthetases. The reaction takes place in the presence of glutamine and ATP through an activated phospho-Asp-tRNA(Asn) or phospho-Glu-tRNA(Gln). This chain is Aspartyl/glutamyl-tRNA(Asn/Gln) amidotransferase subunit C, found in Cereibacter sphaeroides (strain ATCC 17023 / DSM 158 / JCM 6121 / CCUG 31486 / LMG 2827 / NBRC 12203 / NCIMB 8253 / ATH 2.4.1.) (Rhodobacter sphaeroides).